Here is a 430-residue protein sequence, read N- to C-terminus: Probable acetate kinase (430 aa).

N12 is a binding site for Mg(2+). K19 is a binding site for ATP. R100 contacts substrate. D159 functions as the Proton donor/acceptor in the catalytic mechanism. 220–224 is a binding site for ATP; it reads HLGSG. E416 lines the Mg(2+) pocket.

It belongs to the acetokinase family. The cofactor is Mg(2+).

It carries out the reaction acetate + ATP = acetyl phosphate + ADP. Its pathway is metabolic intermediate biosynthesis; acetyl-CoA biosynthesis; acetyl-CoA from acetate: step 1/2. The chain is Probable acetate kinase from Cryptococcus neoformans var. neoformans serotype D (strain B-3501A) (Filobasidiella neoformans).